Reading from the N-terminus, the 391-residue chain is Probable sugar efflux transporter (391 aa).

The next 12 helical transmembrane spans lie at 16–36, 51–71, 82–102, 110–130, 138–158, 170–190, 210–230, 247–267, 277–297, 300–320, 338–358, and 361–381; these read VFVF…PVAL, VGLM…PLML, LLFL…AWNF, MGIA…VIRV, QALG…LPLG, TFGV…KLLP, PLLV…FTTY, ITTL…FLFG, FIAF…VFKN, WVIF…TIAL, IFSG…SIVI, and LGLE…LFWL.

This sequence belongs to the major facilitator superfamily. SotB (TC 2.A.1.2) family.

It localises to the cell inner membrane. Involved in the efflux of sugars. The physiological role may be the reduction of the intracellular concentration of toxic sugars or sugar metabolites. The sequence is that of Probable sugar efflux transporter from Helicobacter pylori (strain J99 / ATCC 700824) (Campylobacter pylori J99).